The chain runs to 413 residues: Serine hydroxymethyltransferase (413 aa).

(6S)-5,6,7,8-tetrahydrofolate is bound by residues Leu-119 and 123–125 (GHL). Lys-228 bears the N6-(pyridoxal phosphate)lysine mark. Glu-243 lines the (6S)-5,6,7,8-tetrahydrofolate pocket.

The protein belongs to the SHMT family. In terms of assembly, homodimer. Requires pyridoxal 5'-phosphate as cofactor.

The protein localises to the cytoplasm. It catalyses the reaction (6R)-5,10-methylene-5,6,7,8-tetrahydrofolate + glycine + H2O = (6S)-5,6,7,8-tetrahydrofolate + L-serine. Its pathway is one-carbon metabolism; tetrahydrofolate interconversion. The protein operates within amino-acid biosynthesis; glycine biosynthesis; glycine from L-serine: step 1/1. Catalyzes the reversible interconversion of serine and glycine with tetrahydrofolate (THF) serving as the one-carbon carrier. This reaction serves as the major source of one-carbon groups required for the biosynthesis of purines, thymidylate, methionine, and other important biomolecules. Also exhibits THF-independent aldolase activity toward beta-hydroxyamino acids, producing glycine and aldehydes, via a retro-aldol mechanism. In Thermoanaerobacter pseudethanolicus (strain ATCC 33223 / 39E) (Clostridium thermohydrosulfuricum), this protein is Serine hydroxymethyltransferase.